Here is a 682-residue protein sequence, read N- to C-terminus: MATAALLRSLRRREFATSSISAYRTLASNTKPSWCPSLVGAKWAGLARPFSSKPAGNEIIGIDLGTTNSCVAVMEGKNPKVIENSEGARTTPSVVAFNQKGELLVGTPAKRQAVTNPTNTLSGTKRLIGRRFDDPQTQKEMKMVPYKIVRGSNGDAWVEANGQQYSPTQIGAFILTKMKETAEAYLGKSINKAVITVPAYFNDAQRQAIKDAGAIAGLDVQRIINEPTAAALSYGMNSKEGLVAVFDLGGGTFDVSILEISNGVFEVKATNGDTFLGGEDFDNALLEFLVSEFKRTEGIDLSKDKLALQRLREAAEKAKIELSSTSQTDINLPFITADASGAKHLNITLTRSKFETLVNHLIERTRNPCKNCLKDAGVSLKDVDEVLLVGGMTRVPKVQEIVSEIFGKSPSKGVNPDEAVAMGAALQGGILRGDVKELLLLDVTPLARGIETLGGIFTRLINRNTTIPTKKSQVFSTAADNQTQVGIKVLQGEREMASDNKLLGEFDLVGIPPAPKGYCPQIEVIFDIDANGMVTVSAKDKATSKEQQITIRSSGGLSEDEIDKMVREAEMHAQRIKNARHLLISGIVQSTTIYSIEKSLSEYKEKVPKEVVTEIETAISDLRAAMGTENIDDIKAKLDAANKAVSKIGEHMAGGSSGGASGGGGAQGGDQPPEAEYEEVKK.

A mitochondrion-targeting transit peptide spans 1 to 57 (MATAALLRSLRRREFATSSISAYRTLASNTKPSWCPSLVGAKWAGLARPFSSKPAGN). The segment at 649 to 682 (GEHMAGGSSGGASGGGGAQGGDQPPEAEYEEVKK) is disordered. Residues 655-668 (GSSGGASGGGGAQG) show a composition bias toward gly residues. Acidic residues predominate over residues 673–682 (PEAEYEEVKK).

The protein belongs to the heat shock protein 70 family.

It is found in the mitochondrion. This is Heat shock 70 kDa protein, mitochondrial (HSP68) from Solanum tuberosum (Potato).